The primary structure comprises 1463 residues: Regulating synaptic membrane exocytosis protein 1 (1463 aa).

Residues 1–26 (MSSAVGPRGPRPPTVPPPMQELPDLS) are disordered. Residues 9–20 (GPRPPTVPPPMQ) show a composition bias toward pro residues. Positions 22-205 (LPDLSHLTEE…TKSGAWFFGS (184 aa)) constitute a RabBD domain. The segment at 133–193 (KDDAPTCGIC…VCNLCRKQQE (61 aa)) adopts an FYVE-type zinc-finger fold. The Zn(2+) site is built by cysteine 139, cysteine 142, cysteine 155, cysteine 158, cysteine 163, cysteine 166, cysteine 185, and cysteine 188. A disordered region spans residues 205–393 (SGPQQPSQDG…DVELESESVS (189 aa)). A compositionally biased stretch (polar residues) spans 206–222 (GPQQPSQDGTLSDTATG). Over residues 227 to 240 (VPREKKARLQERSR) the composition is skewed to basic and acidic residues. Over residues 241-256 (SQTPLSTAAVSSQDTA) the composition is skewed to polar residues. Residues 327-372 (ADERERKERRETRRLEKGRSQDYPDRLEKREDGRVAEDEKQRKEEE) are compositionally biased toward basic and acidic residues. Over residues 381-391 (SCEDVELESES) the composition is skewed to acidic residues. A Phosphoserine modification is found at serine 413. The PDZ domain occupies 440-526 (RTTMPKESGA…EPQVEIIVSR (87 aa)). The segment at 533–567 (RIPESSHPPLESSSSSFESQKMERPSISVISPTSP) is disordered. A compositionally biased stretch (low complexity) spans 535–551 (PESSHPPLESSSSSFES). A phosphoserine mark is found at serine 563 and serine 566. One can recognise a C2 1 domain in the interval 577 to 700 (LPGQLSVKLW…ALLDDEPHWY (124 aa)). The disordered stretch occupies residues 705–856 (HDESSLPLPQ…YSSEPDSELL (152 aa)). Serine 716 carries the phosphoserine modification. The segment covering 770–779 (ATTLTVPEQQ) has biased composition (polar residues). Serine 812 carries the phosphoserine modification. The segment covering 827–844 (RHHDASRSLADHRSRHAE) has biased composition (basic and acidic residues). Serine 866 is modified (phosphoserine). The interval 874-1049 (SELQPSLDRA…RQLPQVPVRS (176 aa)) is disordered. Residues 928–941 (PENDRHSRKSERSS) show a composition bias toward basic and acidic residues. A compositionally biased stretch (polar residues) spans 1021–1035 (QGSPTQSPPADTSFG). At serine 1023 the chain carries Phosphoserine. Threonine 1025 bears the Phosphothreonine mark. Phosphoserine is present on residues serine 1027, serine 1079, serine 1081, serine 1082, serine 1110, serine 1111, and serine 1113. The disordered stretch occupies residues 1104–1161 (DNASAKSSDSDVSDVSAISRASSTSRLSSTSFMSEQSERPRGRISSFTPKMQGRRMGT). Residues 1116–1137 (SDVSAISRASSTSRLSSTSFMS) show a composition bias toward low complexity. Position 1187 is a phosphoserine (serine 1187). Residues 1216-1266 (RSRSTSQLSQTESGHKKLKSTIQRSTETGMAAEMRKMVRQPSRESTDGSIN) are disordered. Over residues 1248–1261 (EMRKMVRQPSREST) the composition is skewed to basic and acidic residues. In terms of domain architecture, C2 2 spans 1309 to 1427 (AMGDIQIGME…DLSSMVIGWY (119 aa)). Serine 1448, serine 1451, serine 1454, and serine 1463 each carry phosphoserine.

As to quaternary structure, binds SNAP25, SYT1 and CACNA1B. Interaction with SYT1 is enhanced by calcium ions. Interaction with SNAP25 is weaker in the presence of calcium ions. Interacts with TSPOAP1 and RIMBP2; interacts with PPFIA3 and PPFIA4. Interacts with ERC1. Interacts with RAB3A, RAB3B and RAB3D that have been activated by GTP-binding. Interacts with RAB3C, RAB10, RAB26 and RAB37. Binds UNC13A. Phosphorylated by BRSK1.

The protein localises to the cell membrane. Its subcellular location is the synapse. It localises to the presynaptic cell membrane. Rab effector involved in exocytosis. May act as scaffold protein that regulates neurotransmitter release at the active zone. Essential for maintaining normal probability of neurotransmitter release and for regulating release during short-term synaptic plasticity. Plays a role in dendrite formation by melanocytes. The chain is Regulating synaptic membrane exocytosis protein 1 (Rims1) from Mus musculus (Mouse).